Reading from the N-terminus, the 287-residue chain is ATP synthase gamma chain (287 aa).

This sequence belongs to the ATPase gamma chain family. F-type ATPases have 2 components, CF(1) - the catalytic core - and CF(0) - the membrane proton channel. CF(1) has five subunits: alpha(3), beta(3), gamma(1), delta(1), epsilon(1). CF(0) has three main subunits: a, b and c.

The protein resides in the cell inner membrane. In terms of biological role, produces ATP from ADP in the presence of a proton gradient across the membrane. The gamma chain is believed to be important in regulating ATPase activity and the flow of protons through the CF(0) complex. The chain is ATP synthase gamma chain from Ectopseudomonas mendocina (strain ymp) (Pseudomonas mendocina).